Reading from the N-terminus, the 158-residue chain is NADH-quinone oxidoreductase subunit B (158 aa).

Residues Cys37, Cys38, Cys102, and Cys132 each coordinate [4Fe-4S] cluster.

Belongs to the complex I 20 kDa subunit family. In terms of assembly, NDH-1 is composed of 14 different subunits. Subunits NuoB, C, D, E, F, and G constitute the peripheral sector of the complex. [4Fe-4S] cluster is required as a cofactor.

The protein localises to the cell inner membrane. The catalysed reaction is a quinone + NADH + 5 H(+)(in) = a quinol + NAD(+) + 4 H(+)(out). In terms of biological role, NDH-1 shuttles electrons from NADH, via FMN and iron-sulfur (Fe-S) centers, to quinones in the respiratory chain. The immediate electron acceptor for the enzyme in this species is believed to be ubiquinone. Couples the redox reaction to proton translocation (for every two electrons transferred, four hydrogen ions are translocated across the cytoplasmic membrane), and thus conserves the redox energy in a proton gradient. This chain is NADH-quinone oxidoreductase subunit B, found in Halorhodospira halophila (strain DSM 244 / SL1) (Ectothiorhodospira halophila (strain DSM 244 / SL1)).